Consider the following 250-residue polypeptide: MNLKITINQQASISDSLIIANLNLIQFFRDNTFNKIECDQLLTLKDAVQISQILKDQGVLIYEGEINESVITYFQASGLYNQGQGKFIKQVLQIKKLNIPQQEFNNCYGKYDYIEQKFQNQINFFKQVDINGKQEIIDENELLDDGVQVKQVESCASKPRACANCTCGRKEMEEKQDKEQLLEQLKNNSIKGCGSCYLGDAFRCANCPYRGLPAFKDGEQVKVLQDDVFLQEQEEKDQVKLENGKVKLKI.

Residues 1 to 104 (MNLKITINQQ…KKLNIPQQEF (104 aa)) are N-terminal SAM-like domain. Residues 104-149 (FNNCYGKYDYIEQKFQNQINFFKQVDINGKQEIIDENELLDDGVQV) form a linker region. 4 residues coordinate [2Fe-2S] cluster: cysteine 155, cysteine 162, cysteine 165, and cysteine 167. A fe-S binding site A region spans residues 155–167 (CASKPRACANCTC). The [4Fe-4S] cluster site is built by cysteine 193, cysteine 196, cysteine 204, and cysteine 207. Short sequence motifs (cx2C motif) lie at residues 193–196 (CGSC) and 204–207 (CANC). A fe-S binding site B region spans residues 193 to 207 (CGSCYLGDAFRCANC).

This sequence belongs to the anamorsin family. Monomer. The cofactor is [2Fe-2S] cluster. [4Fe-4S] cluster serves as cofactor.

It localises to the cytoplasm. The protein localises to the mitochondrion intermembrane space. Functionally, component of the cytosolic iron-sulfur (Fe-S) protein assembly (CIA) machinery. Required for the maturation of extramitochondrial Fe-S proteins. Part of an electron transfer chain functioning in an early step of cytosolic Fe-S biogenesis, facilitating the de novo assembly of a [4Fe-4S] cluster on the cytosolic Fe-S scaffold complex. Electrons are transferred from NADPH via a FAD- and FMN-containing diflavin oxidoreductase. Together with the diflavin oxidoreductase, also required for the assembly of the diferric tyrosyl radical cofactor of ribonucleotide reductase (RNR), probably by providing electrons for reduction during radical cofactor maturation in the catalytic small subunit. In Paramecium tetraurelia, this protein is Anamorsin homolog 1.